The chain runs to 495 residues: Mesoderm induction early response protein 1 (495 aa).

Disordered stretches follow at residues 1-25 and 76-131; these read MAEP…FEPS and GSTV…PSFT. Residues 83–94 are compositionally biased toward acidic residues; it reads GEEEEDEEDMDN. The span at 120-130 shows a compositional bias: polar residues; it reads QSSNDDPTPSF. One can recognise an ELM2 domain in the interval 171–269; that stretch reads KEIMVGSMFQ…EALRRLRFNV (99 aa). Residues 274-326 form the SANT domain; the sequence is EELSVWTEEECRNFEQGLKAYGKDFHLIQANKVRTRSVGECVAFYYMWKKSER. Disordered regions lie at residues 356–397 and 416–495; these read DESE…NGVS and HLNG…HGEV. Polar residues-rich tracts occupy residues 387 to 397 and 420 to 440; these read TASNNTQNGVS and PTIS…YNRE. A compositionally biased stretch (basic and acidic residues) spans 462 to 476; sequence TNERPIKRQRMDSPG. Polar residues predominate over residues 477-489; the sequence is KESTGSSEFSQEV.

Its subcellular location is the nucleus. In terms of biological role, transcriptional repressor regulating the expression of a number of genes. Probably functions through recruitment of histone deacetylases involved in chromatin silencing. The polypeptide is Mesoderm induction early response protein 1 (mier1) (Xenopus laevis (African clawed frog)).